Reading from the N-terminus, the 222-residue chain is Thiopurine S-methyltransferase (222 aa).

S-adenosyl-L-methionine is bound by residues tryptophan 10, leucine 45, glutamate 66, and arginine 126.

This sequence belongs to the class I-like SAM-binding methyltransferase superfamily. TPMT family.

The protein localises to the cytoplasm. It catalyses the reaction S-adenosyl-L-methionine + a thiopurine = S-adenosyl-L-homocysteine + a thiopurine S-methylether.. The polypeptide is Thiopurine S-methyltransferase (Shewanella piezotolerans (strain WP3 / JCM 13877)).